Here is a 580-residue protein sequence, read N- to C-terminus: Arginine--tRNA ligase (580 aa).

The 'HIGH' region signature appears at 127 to 137 (PNTHKELHVGH).

The protein belongs to the class-I aminoacyl-tRNA synthetase family. In terms of assembly, monomer.

It is found in the cytoplasm. The enzyme catalyses tRNA(Arg) + L-arginine + ATP = L-arginyl-tRNA(Arg) + AMP + diphosphate. The sequence is that of Arginine--tRNA ligase from Bdellovibrio bacteriovorus (strain ATCC 15356 / DSM 50701 / NCIMB 9529 / HD100).